The following is a 495-amino-acid chain: Ribitol 5-phosphate transferase FKRP (495 aa).

At 1–6 (MRLTRC) the chain is on the cytoplasmic side. Residues 7–29 (QAALAAAITLNLLVLFYVSWLQH) form a helical membrane-spanning segment. Residues 30 to 495 (QPRNSRARGP…PALLSLTGSG (466 aa)) are Lumenal-facing. Cysteines 168 and 191 form a disulfide. 2 N-linked (GlcNAc...) asparagine glycosylation sites follow: Asn-172 and Asn-209. Zn(2+) contacts are provided by Cys-289, Cys-296, Cys-317, and Cys-318. Residues 289–318 (CNKETTRCFGTVVGDTPAYLYEERWTPPCC) form a zinc finger loop region. Residues Gly-345, Arg-352, 359 to 364 (WDYDVD), 437 to 438 (QD), and 480 to 482 (NPQ) each bind CDP-L-ribitol. Asp-360, Asp-362, and Asp-364 together coordinate Mg(2+).

Belongs to the LicD transferase family. As to quaternary structure, homodimer; disulfide-linked. Tetramer. Forms a complex composed of FKRP, FKTN/fukutin, and RXYLT1/TMEM5. Also exists as large multimeric protein complexes. May interact with the dystrophin-glycoprotein complex (DGC). Mg(2+) serves as cofactor. N-glycosylated. As to expression, expressed in the retina (at protein level). Expressed predominantly in skeletal muscle, placenta, and heart and relatively weakly in brain, lung, liver, kidney, and pancreas.

The protein localises to the golgi apparatus membrane. The protein resides in the secreted. It localises to the cell membrane. It is found in the sarcolemma. Its subcellular location is the rough endoplasmic reticulum. The protein localises to the cytoplasm. It carries out the reaction 3-O-[Rib-ol-P-3-beta-D-GalNAc-(1-&gt;3)-beta-D-GlcNAc-(1-&gt;4)-(O-6-P-alpha-D-Man)]-Thr-[protein] + CDP-L-ribitol = 3-O-[Rib-ol-P-Rib-ol-P-3-beta-D-GalNAc-(1-&gt;3)-beta-D-GlcNAc-(1-&gt;4)-(O-6-P-alpha-D-Man)]-Thr-[protein] + CMP + H(+). Its pathway is protein modification; protein glycosylation. Catalyzes the transfer of a ribitol 5-phosphate from CDP-L-ribitol to the ribitol 5-phosphate previously attached by FKTN/fukutin to the phosphorylated O-mannosyl trisaccharide (N-acetylgalactosamine-beta-3-N-acetylglucosamine-beta-4-(phosphate-6-)mannose), a carbohydrate structure present in alpha-dystroglycan (DAG1). This constitutes the second step in the formation of the ribose 5-phosphate tandem repeat which links the phosphorylated O-mannosyl trisaccharide to the ligand binding moiety composed of repeats of 3-xylosyl-alpha-1,3-glucuronic acid-beta-1. This Homo sapiens (Human) protein is Ribitol 5-phosphate transferase FKRP.